The primary structure comprises 668 residues: Putative ankyrin repeat protein FPV244 (668 aa).

ANK repeat units follow at residues 40–69 (IPFTAIHQALQLRQIDIVKELIQQNPKLIY), 144–173 (EYMKLIKERIQQDELLIAEMLLKKGIDVNA), 177–206 (YCRTPIHYAAERGNTKMVNLLLSYGADVNI), 210–239 (DDLSVLEYAVDSKNIDTIKAIIDNRSNINK), 272–302 (YKNTPLHYAVQAPSLSRLVPKLLERGIDVNA), 306–336 (KGETPLYLMAKNGYDTENIRTLIMRGADVNA), 340–370 (LYITPLHQASTLDRYKDTVITLLELGANVNA), 374–403 (CDKTPIHYAAVRNNVVIINTLLDYGADIEA), 407–437 (KIGTVLHFALYGTNPYMSVKTLIDRGANVNS), 441–471 (YLSTPLHYACKKNCKPEVIKMLLDNGADVNA), 473–502 (NIRNQYPLLIALEYHGIVNILLHYGAELRD), and 571–602 (NMFYSLDIFVISKNMNLLHHLVNNPIIKEINT).

The chain is Putative ankyrin repeat protein FPV244 from Vertebrata (FPV).